Consider the following 640-residue polypeptide: Lysophospholipase (640 aa).

Positions 1-25 (MWFLNSVNLLFLVCSVALHLDAVNA) are cleaved as a signal peptide. In terms of domain architecture, PLA2c spans 38 to 589 (DCDENINLVR…EKYCWNGTVD (552 aa)). 15 N-linked (GlcNAc...) asparagine glycosylation sites follow: Asn84, Asn126, Asn163, Asn173, Asn218, Asn280, Asn310, Asn317, Asn348, Asn391, Asn492, Asn516, Asn544, Asn568, and Asn585. A compositionally biased stretch (low complexity) spans 594–610 (ISSTTSSSASSTSTSDS). The disordered stretch occupies residues 594–616 (ISSTTSSSASSTSTSDSGNKENS).

This sequence belongs to the lysophospholipase family. Post-translationally, highly glycosylated.

Its subcellular location is the secreted. It catalyses the reaction a 1-acyl-sn-glycero-3-phosphocholine + H2O = sn-glycerol 3-phosphocholine + a fatty acid + H(+). In terms of biological role, catalyzes the release of fatty acids from lysophospholipids. At acidic pH the enzyme hydrolyzes all phospholipid substrates without metal ion. On the other hand, at alkaline pH the enzyme shows substrate specificity for phosphatidylcholine and lysophosphatidylcholine and requires Ca(2+), Fe(3+), or Al(3+) for the activity. In Kluyveromyces lactis (strain ATCC 8585 / CBS 2359 / DSM 70799 / NBRC 1267 / NRRL Y-1140 / WM37) (Yeast), this protein is Lysophospholipase (PLB).